An 823-amino-acid chain; its full sequence is Hypoxia-inducible factor 1-alpha (823 aa).

The segment at 1-30 (MEGAGGANDKKKISSERRKEKSRDAARSRR) is disordered. Positions 1–401 (MEGAGGANDK…KEPDALTLLA (401 aa)) are interaction with TSGA10. A compositionally biased stretch (basic and acidic residues) spans 8 to 30 (NDKKKISSERRKEKSRDAARSRR). The bHLH domain occupies 17–70 (RRKEKSRDAARSRRSKESEVFYELAHQLPLPHNVSSHLDKASVMRLTISYLRVR). The segment at 21 to 30 (KSRDAARSRR) is DNA-binding. A PAS 1 domain is found at 85–158 (KAQMNCFYLK…THRNGLVKKG (74 aa)). The required for heterodimer formation with ARNT stretch occupies residues 170 to 191 (RMKCTLTSRGRTMNIKSATWKV). The 71-residue stretch at 228-298 (PHPSNIEIPL…KTHHDMFTKG (71 aa)) folds into the PAS 2 domain. Serine 247 is modified (phosphoserine; by CK1). In terms of domain architecture, PAC spans 302 to 345 (TGQYRMLAKRGGYVWIETQATVIYNTKNSQPQCIVCVNYVVSGI). Positions 401-600 (APAAGDTIIS…QSASTNTVFQ (200 aa)) are ODD. Position 402 is a 4-hydroxyproline (proline 402). Residues 494–517 (IQDQPASPSDGSTRQSSPEPNSPS) show a composition bias toward polar residues. The disordered stretch occupies residues 494–521 (IQDQPASPSDGSTRQSSPEPNSPSEYCF). The NTAD stretch occupies residues 531 to 575 (FKLELVEKLFAEDTEAKNPFSTQDTDLDLEMLAPYIPMDDDFQLR). Lysine 532 carries the N6-acetyllysine; alternate modification. Residue lysine 532 forms a Glycyl lysine isopeptide (Lys-Gly) (interchain with G-Cter in ubiquitin); alternate linkage. Glycyl lysine isopeptide (Lys-Gly) (interchain with G-Cter in ubiquitin) cross-links involve residues lysine 538 and lysine 547. Serine 551 carries the post-translational modification Phosphoserine; by GSK3-beta. Phosphothreonine; by GSK3-beta is present on threonine 555. 4-hydroxyproline is present on proline 564. The residue at position 576 (serine 576) is a Phosphoserine; by PLK3. The segment at 576 to 782 (SFDQLSPLEN…SDLACRLLGQ (207 aa)) is ID. Disordered stretches follow at residues 581–602 (SPLE…FQPT) and 639–685 (PSPP…PRSP). Serine 589 is subject to Phosphoserine; by GSK3-beta. The segment covering 651 to 666 (ATTSPYSDTGSRTASP) has biased composition (polar residues). Phosphoserine; by PLK3 is present on serine 654. Lysine 706 carries the N6-acetyllysine modification. The Nuclear localization signal signature appears at 715–721 (RKRKIEH). A CTAD region spans residues 783-823 (SMDESGLPQLTSYDCEVNAPIQGSRNLLQGEELLRALDQVN). Residue cysteine 797 is modified to S-nitrosocysteine. Asparagine 800 carries the post-translational modification (3S)-3-hydroxyasparagine.

As to quaternary structure, interacts with the ARNT; forms a heterodimer that binds core DNA sequence 5'-TACGTG-3' within the hypoxia response element (HRE) of target gene promoters. Interacts with COPS5; the interaction increases the transcriptional activity of HIF1A through increased stability. Interacts with EP300 (via TAZ-type 1 domains); the interaction is stimulated in response to hypoxia and inhibited by CITED2. Interacts with CREBBP (via TAZ-type 1 domains). Interacts with NCOA1, NCOA2, APEX1 and HSP90. Interacts (hydroxylated within the ODD domain) with VHLL (via beta domain); the interaction, leads to polyubiquitination and subsequent HIF1A proteasomal degradation. During hypoxia, sumoylated HIF1A also binds VHL; the interaction promotes the ubiquitination of HIF1A. Interacts with SENP1; the interaction desumoylates HIF1A resulting in stabilization and activation of transcription. Interacts (via the ODD domain) with NAA10; the interaction appears not to acetylate HIF1A nor have any affect on protein stability, during hypoxia. Interacts with RWDD3; the interaction enhances HIF1A sumoylation. Interacts with TSGA10. Interacts with HIF3A. Interacts with RORA (via the DNA binding domain); the interaction enhances HIF1A transcription under hypoxia through increasing protein stability. Interaction with PSMA7 inhibits the transactivation activity of HIF1A under both normoxic and hypoxia-mimicking conditions. Interacts with USP20. Interacts with RACK1; promotes HIF1A ubiquitination and proteasome-mediated degradation. Interacts (via N-terminus) with USP19. Interacts with SIRT2. Interacts (deacetylated form) with EGLN1. Interacts with CBFA2T3. Interacts with HSP90AA1 and HSP90AB1. Interacts with DCUN1D1; this interaction increases the interaction between VHL and DCUN1D1. Interacts with HIF1AN. S-nitrosylation of Cys-797 may be responsible for increased recruitment of p300 coactivator necessary for transcriptional activity of HIF-1 complex. In terms of processing, acetylation of Lys-532 by ARD1 increases interaction with VHL and stimulates subsequent proteasomal degradation. Deacetylation of Lys-706 by SIRT2 increases its interaction with and hydroxylation by EGLN1 thereby inactivating HIF1A activity by inducing its proteasomal degradation. Post-translationally, ubiquitinated; in normoxia, following hydroxylation and interaction with VHL. Lys-532 appears to be the principal site of ubiquitination. Clioquinol, the Cu/Zn-chelator, inhibits ubiquitination through preventing hydroxylation at Asn-800. Ubiquitinated by E3 ligase VHL. Deubiquitinated by UCHL1. Requires phosphorylation for DNA-binding. Phosphorylation at Ser-247 by CSNK1D/CK1 represses kinase activity and impairs ARNT binding. Phosphorylation by GSK3-beta and PLK3 promote degradation by the proteasome. In terms of processing, the iron and 2-oxoglutarate dependent 3-hydroxylation of asparagine is (S) stereospecific within HIF CTAD domains. Post-translationally, sumoylated; with SUMO1 under hypoxia. Sumoylation is enhanced through interaction with RWDD3. Both sumoylation and desumoylation seem to be involved in the regulation of its stability during hypoxia. Sumoylation can promote either its stabilization or its VHL-dependent degradation by promoting hydroxyproline-independent HIF1A-VHL complex binding, thus leading to HIF1A ubiquitination and proteasomal degradation. Desumoylation by SENP1 increases its stability amd transcriptional activity. There is a disaccord between various publications on the effect of sumoylation and desumoylation on its stability and transcriptional activity. In normoxia, is hydroxylated on Pro-402 and Pro-564 in the oxygen-dependent degradation domain (ODD) by EGLN1/PHD2 and EGLN2/PHD1. EGLN3/PHD3 has also been shown to hydroxylate Pro-564. The hydroxylated prolines promote interaction with VHL, initiating rapid ubiquitination and subsequent proteasomal degradation. Deubiquitinated by USP20. Under hypoxia, proline hydroxylation is impaired and ubiquitination is attenuated, resulting in stabilization. In normoxia, is hydroxylated on Asn-800 by HIF1AN, thus abrogating interaction with CREBBP and EP300 and preventing transcriptional activation. Repressed by iron ion, via Fe(2+) prolyl hydroxylase (PHD) enzymes-mediated hydroxylation and subsequent proteasomal degradation.

The protein resides in the cytoplasm. It localises to the nucleus. With respect to regulation, induced by reactive oxygen species (ROS). Functionally, functions as a master transcriptional regulator of the adaptive response to hypoxia. Under hypoxic conditions, activates the transcription of over 40 genes, including erythropoietin, glucose transporters, glycolytic enzymes, vascular endothelial growth factor, HILPDA, and other genes whose protein products increase oxygen delivery or facilitate metabolic adaptation to hypoxia. Plays an essential role in embryonic vascularization, tumor angiogenesis and pathophysiology of ischemic disease. Heterodimerizes with ARNT; heterodimer binds to core DNA sequence 5'-TACGTG-3' within the hypoxia response element (HRE) of target gene promoters. Activation requires recruitment of transcriptional coactivators such as CREBBP and EP300. Activity is enhanced by interaction with NCOA1 and/or NCOA2. Interaction with redox regulatory protein APEX1 seems to activate CTAD and potentiates activation by NCOA1 and CREBBP. Involved in the axonal distribution and transport of mitochondria in neurons during hypoxia. This Bos taurus (Bovine) protein is Hypoxia-inducible factor 1-alpha (HIF1A).